Reading from the N-terminus, the 185-residue chain is MLELVYEEIEEKMGKTLEVFKNDLKKVRTGRASLALLDGIVVDYYGTPTPLNQLASLSVPESRLIVIQPWDATAIKDVEKAILQANIDLTPSNDGKVIRLSIPPLTEDRRKEIAKRVNQMAEEHKVAMRNIRRDANETLKQMKKDGDISEDESFAGKDKVQKVTDGYIERIDEVFKAKEKEILEL.

This sequence belongs to the RRF family.

It localises to the cytoplasm. In terms of biological role, responsible for the release of ribosomes from messenger RNA at the termination of protein biosynthesis. May increase the efficiency of translation by recycling ribosomes from one round of translation to another. This is Ribosome-recycling factor from Desulfosudis oleivorans (strain DSM 6200 / JCM 39069 / Hxd3) (Desulfococcus oleovorans).